The following is an 858-amino-acid chain: Putative glutamate--cysteine ligase 2-3 (858 aa).

The segment at 1-372 (MSDARNVAVG…RDVPPAGASL (372 aa)) is carboxylate-amine ligase. Residues 373–858 (GVAPAVSAPD…GSKDTWIPRR (486 aa)) form a unknown region.

It in the N-terminal section; belongs to the glutamate--cysteine ligase type 2 family. YbdK subfamily.

The catalysed reaction is L-cysteine + L-glutamate + ATP = gamma-L-glutamyl-L-cysteine + ADP + phosphate + H(+). Its function is as follows. ATP-dependent carboxylate-amine ligase which exhibits weak glutamate--cysteine ligase activity. This is Putative glutamate--cysteine ligase 2-3 from Frankia alni (strain DSM 45986 / CECT 9034 / ACN14a).